Reading from the N-terminus, the 374-residue chain is GTPase Obg (374 aa).

Residues 1–159 (MKFIDEVRIH…RDLRLELRLL (159 aa)) enclose the Obg domain. An OBG-type G domain is found at 160–333 (ADVGLLGLPN…LVYAIWQALP (174 aa)). GTP-binding positions include 166–173 (GLPNAGKS), 191–195 (FTTLY), 213–216 (DIPG), 283–286 (NKSD), and 314–316 (SAA). S173 and T193 together coordinate Mg(2+). Residues 337–374 (PAADPTQTEDWGDESDAGERLENWEGDDLDADWEEEQV) are disordered. Acidic residues predominate over residues 360–374 (WEGDDLDADWEEEQV).

This sequence belongs to the TRAFAC class OBG-HflX-like GTPase superfamily. OBG GTPase family. In terms of assembly, monomer. The cofactor is Mg(2+).

It localises to the cytoplasm. An essential GTPase which binds GTP, GDP and possibly (p)ppGpp with moderate affinity, with high nucleotide exchange rates and a fairly low GTP hydrolysis rate. Plays a role in control of the cell cycle, stress response, ribosome biogenesis and in those bacteria that undergo differentiation, in morphogenesis control. This Acidithiobacillus ferrooxidans (strain ATCC 23270 / DSM 14882 / CIP 104768 / NCIMB 8455) (Ferrobacillus ferrooxidans (strain ATCC 23270)) protein is GTPase Obg.